Reading from the N-terminus, the 228-residue chain is MENQKILVAKYAIDHYIKSNMNLGIGTGTTIYYAIKYLSEKIKSGSLKNLKFYTTSSDTKYLLSKEQIPYESNFSKLNKNLDIAIDGADEILLEKKSLIKGMGGAHLMEKVIAYNSETLLIIADETKIVKKLGTKMPIPIEVAQNAVGFIMTRLEEMNLEATLRICKEKKGPTITDNNNYILDVKMHVENPEGTEKYFKLFPGILEIGIFNHKNTRIVYYQDKQIKEA.

Substrate-binding positions include threonine 27–threonine 30, aspartate 86–aspartate 89, and lysine 100–glycine 103. The Proton acceptor role is filled by glutamate 109. Lysine 127 lines the substrate pocket.

The protein belongs to the ribose 5-phosphate isomerase family. In terms of assembly, homodimer.

It carries out the reaction aldehydo-D-ribose 5-phosphate = D-ribulose 5-phosphate. It participates in carbohydrate degradation; pentose phosphate pathway; D-ribose 5-phosphate from D-ribulose 5-phosphate (non-oxidative stage): step 1/1. Functionally, catalyzes the reversible conversion of ribose-5-phosphate to ribulose 5-phosphate. The polypeptide is Ribose-5-phosphate isomerase A (Borreliella burgdorferi (strain ZS7) (Borrelia burgdorferi)).